Consider the following 157-residue polypeptide: 3-dehydroquinate dehydratase (157 aa).

Tyr24 acts as the Proton acceptor in catalysis. Substrate is bound by residues Asn75, His81, and Asp88. Residue His101 is the Proton donor of the active site. Substrate is bound by residues 102 to 103 (LS) and Arg112.

Belongs to the type-II 3-dehydroquinase family. Homododecamer.

It carries out the reaction 3-dehydroquinate = 3-dehydroshikimate + H2O. Its pathway is metabolic intermediate biosynthesis; chorismate biosynthesis; chorismate from D-erythrose 4-phosphate and phosphoenolpyruvate: step 3/7. Its function is as follows. Catalyzes a trans-dehydration via an enolate intermediate. The sequence is that of 3-dehydroquinate dehydratase from Brucella abortus (strain S19).